A 209-amino-acid polypeptide reads, in one-letter code: Ribose 1,5-bisphosphate phosphokinase PhnN (209 aa).

27–34 is a binding site for ATP; the sequence is GPSGGGKD.

Belongs to the ribose 1,5-bisphosphokinase family.

It catalyses the reaction alpha-D-ribose 1,5-bisphosphate + ATP = 5-phospho-alpha-D-ribose 1-diphosphate + ADP. It participates in metabolic intermediate biosynthesis; 5-phospho-alpha-D-ribose 1-diphosphate biosynthesis; 5-phospho-alpha-D-ribose 1-diphosphate from D-ribose 5-phosphate (route II): step 3/3. Functionally, catalyzes the phosphorylation of ribose 1,5-bisphosphate to 5-phospho-D-ribosyl alpha-1-diphosphate (PRPP). This chain is Ribose 1,5-bisphosphate phosphokinase PhnN, found in Chelativorans sp. (strain BNC1).